The following is a 213-amino-acid chain: Heat shock protein 30C (213 aa).

Residues 61–80 are compositionally biased toward basic and acidic residues; sequence SKDTEMRRITDQNRQSRESE. Disordered regions lie at residues 61–93 and 174–213; these read SKDT…GKDH and ALPP…QKVD. The 113-residue stretch at 76–188 folds into the sHSP domain; that stretch reads SRESEGTSPN…PETPIPISMD (113 aa).

Belongs to the small heat shock protein (HSP20) family.

The chain is Heat shock protein 30C (hsp30c) from Xenopus laevis (African clawed frog).